The sequence spans 255 residues: Putative enoyl-CoA hydratase/isomerase YhaR (255 aa).

The next 2 membrane-spanning stretches (helical) occupy residues 96–116 (VTIAAIHGAAAGLGLSLALCA) and 126–146 (VLAMNFIGIGLVPDGGGHYLL).

This sequence belongs to the enoyl-CoA hydratase/isomerase family.

The protein localises to the cell membrane. The sequence is that of Putative enoyl-CoA hydratase/isomerase YhaR (yhaR) from Bacillus subtilis (strain 168).